The following is a 133-amino-acid chain: Phosphoribosyl-AMP cyclohydrolase (133 aa).

Position 77 (Asp77) interacts with Mg(2+). A Zn(2+)-binding site is contributed by Cys78. Positions 79 and 81 each coordinate Mg(2+). Zn(2+)-binding residues include Cys95 and Cys102.

The protein belongs to the PRA-CH family. Homodimer. It depends on Mg(2+) as a cofactor. Zn(2+) serves as cofactor.

The protein resides in the cytoplasm. The enzyme catalyses 1-(5-phospho-beta-D-ribosyl)-5'-AMP + H2O = 1-(5-phospho-beta-D-ribosyl)-5-[(5-phospho-beta-D-ribosylamino)methylideneamino]imidazole-4-carboxamide. It functions in the pathway amino-acid biosynthesis; L-histidine biosynthesis; L-histidine from 5-phospho-alpha-D-ribose 1-diphosphate: step 3/9. Its function is as follows. Catalyzes the hydrolysis of the adenine ring of phosphoribosyl-AMP. The sequence is that of Phosphoribosyl-AMP cyclohydrolase from Pseudomonas fluorescens (strain Pf0-1).